We begin with the raw amino-acid sequence, 237 residues long: Lycopene beta-cyclase (237 aa).

Transmembrane regions (helical) follow at residues 3–23, 38–58, 80–100, 113–133, 137–157, 170–192, and 213–233; these read TSYL…LGVV, VGIL…YLIA, EYLF…ALPL, AVLG…LLTV, FYIG…WAVG, AAVL…DGIW, and AFFF…AWVL.

It belongs to the lycopene beta-cyclase family.

The protein localises to the cell membrane. The catalysed reaction is a carotenoid psi-end group = a carotenoid beta-end derivative. It carries out the reaction all-trans-lycopene = gamma-carotene. It catalyses the reaction gamma-carotene = all-trans-beta-carotene. It participates in carotenoid biosynthesis; beta-carotene biosynthesis. Functionally, catalyzes the cyclization of both ends of lycopene to form beta-carotene, a retinal precursor. Is required for bacteriorhodopsin biogenesis, a light-driven proton pump with a covalently bound retinal cofactor. The protein is Lycopene beta-cyclase of Halobacterium salinarum (strain ATCC 29341 / DSM 671 / R1).